The chain runs to 158 residues: Protein hunchback (158 aa).

The segment covering 18–34 (HNHHHHHHHGHHQHQQR) has biased composition (basic residues). 2 disordered regions span residues 18–96 (HNHH…TTTA) and 118–158 (LTPP…KYMA). Residues 41–50 (ASSPHQSPLP) show a composition bias toward polar residues. Residues 52 to 65 (LQLEQYLKQQQQQP) show a composition bias toward low complexity. Residues 139–158 (EPEKEHDLMSNSSEDMKYMA) show a composition bias toward basic and acidic residues.

It belongs to the hunchback C2H2-type zinc-finger protein family.

The protein resides in the nucleus. Its function is as follows. Gap class segmentation protein that controls development of head structures. The protein is Protein hunchback (hb) of Drosophila mimica (Fruit fly).